A 549-amino-acid chain; its full sequence is Urocanate hydratase (549 aa).

NAD(+) is bound by residues 46–47, Gln-124, Glu-190, Arg-195, 236–237, 257–261, 267–268, and Tyr-316; these read GG, NA, QTSAH, and YV. Cys-404 is a catalytic residue. An NAD(+)-binding site is contributed by Gly-486.

The protein belongs to the urocanase family. NAD(+) serves as cofactor.

It localises to the cytoplasm. The catalysed reaction is 4-imidazolone-5-propanoate = trans-urocanate + H2O. Its pathway is amino-acid degradation; L-histidine degradation into L-glutamate; N-formimidoyl-L-glutamate from L-histidine: step 2/3. Functionally, catalyzes the conversion of urocanate to 4-imidazolone-5-propionate. The sequence is that of Urocanate hydratase from Thermoanaerobacter pseudethanolicus (strain ATCC 33223 / 39E) (Clostridium thermohydrosulfuricum).